Reading from the N-terminus, the 795-residue chain is Copper-exporting P-type ATPase (795 aa).

HMA domains are found at residues 5 to 70 and 72 to 138; these read QNAT…YDVV and DKAE…YDAQ. Cys-16, Cys-19, Cys-83, and Cys-86 together coordinate Cu(+). 6 consecutive transmembrane segments (helical) span residues 161 to 181, 187 to 207, 224 to 244, 256 to 276, 412 to 432, and 440 to 460; these read LMISTILSLPLLMTMLVHLFN, ILMNPWFQFILATPIQFIIGW, MDVLVALGTSAAYFYSIYEMI, LYFETSAVLITLILFGKYLEA, YFVPIVIAIALLTFLIWITLV, and ALVAAISVLVIACPCALGLAT. Asp-496 (4-aspartylphosphate intermediate) is an active-site residue. Positions 690 and 694 each coordinate Mg(2+). 2 helical membrane-spanning segments follow: residues 747-764 and 770-788; these read NLFWAFGYNIAGIPIAAM and WIAGAAMALSSVSVVSNAL.

This sequence belongs to the cation transport ATPase (P-type) (TC 3.A.3) family. Type IB subfamily.

Its subcellular location is the cell membrane. It carries out the reaction Cu(+)(in) + ATP + H2O = Cu(+)(out) + ADP + phosphate + H(+). Functionally, involved in copper export. The protein is Copper-exporting P-type ATPase (copA) of Staphylococcus haemolyticus (strain JCSC1435).